Consider the following 436-residue polypeptide: Succinyl-CoA:glutarate CoA-transferase (436 aa).

The transit peptide at 1–8 (MLWMLARA) directs the protein to the mitochondrion. The active-site Nucleophile is Asp203. Residues Lys392 and Lys423 each carry the N6-acetyllysine modification.

It belongs to the CoA-transferase III family.

It is found in the mitochondrion. It catalyses the reaction glutarate + succinyl-CoA = glutaryl-CoA + succinate. It carries out the reaction 3-hydroxy-3-methylglutarate + succinyl-CoA = (3S)-3-hydroxy-3-methylglutaryl-CoA + succinate. The catalysed reaction is 3-hydroxy-3-methylglutarate + glutaryl-CoA = (3S)-3-hydroxy-3-methylglutaryl-CoA + glutarate. The enzyme catalyses hexanedioate + glutaryl-CoA = hexanedioyl-CoA + glutarate. It catalyses the reaction itaconate + glutaryl-CoA = itaconyl-CoA + glutarate. It carries out the reaction itaconate + succinyl-CoA = itaconyl-CoA + succinate. Its function is as follows. Coenzyme A (CoA) transferase that reversibly catalyzes the transfer of a CoA moiety from a dicarboxyl-CoA to a dicarboxylate in a metabolite recycling process. Displays preference for succinyl-CoA and glutarate-CoA as dicarboxyl-CoA donors and glutarate, succinate, adipate/hexanedioate, itaconate and 3-hydroxy-3-methylglutarate as dicarboxylate acceptors. Acts on intermediates or end products of lysine and tryptophan degradation pathway, in particular catalyzes succinyl-CoA-dependent reesterification of free glutarate into glutaryl-CoA to prevent renal excretion of glutarate. Upon inflammation, may convert macrophage-derived itaconate to itaconyl-CoA in erythroid precursors where it negatively regulates the TCA cycle and heme synthesis to limit erythroid differentiation in the context of stress erythropoiesis. This is Succinyl-CoA:glutarate CoA-transferase from Mus musculus (Mouse).